The primary structure comprises 239 residues: Small ribosomal subunit protein uS2 (239 aa).

This sequence belongs to the universal ribosomal protein uS2 family.

The chain is Small ribosomal subunit protein uS2 from Francisella tularensis subsp. novicida (strain U112).